The primary structure comprises 75 residues: Small ribosomal subunit protein bS18c (75 aa).

The protein belongs to the bacterial ribosomal protein bS18 family. In terms of assembly, part of the 30S ribosomal subunit.

The protein resides in the plastid. It localises to the chloroplast. The polypeptide is Small ribosomal subunit protein bS18c (rps18) (Anthoceros angustus (Hornwort)).